Consider the following 329-residue polypeptide: Ankyrin repeat and SOCS box protein 5 (329 aa).

ANK repeat units lie at residues 69–98 (ADRS…NVNA), 102–131 (DHVT…NANA), 135–164 (DGVT…KAQL), 167–196 (CFPS…DVDQ), 200–229 (HLGT…DVHK), and 232–261 (YWDT…DINA). An SOCS box domain is found at 278–329 (AVERILLQHEATPSSLCQLCRLCIRNYIGRQRFHLIPQLQLPTLLQNFLQYR).

This sequence belongs to the ankyrin SOCS box (ASB) family.

It participates in protein modification; protein ubiquitination. May be a substrate-recognition component of a SCF-like ECS (Elongin-Cullin-SOCS-box protein) E3 ubiquitin-protein ligase complex which mediates the ubiquitination and subsequent proteasomal degradation of target proteins. May play a role in the initiation of arteriogenesis. This Mus musculus (Mouse) protein is Ankyrin repeat and SOCS box protein 5 (Asb5).